Reading from the N-terminus, the 383-residue chain is Deoxyguanosinetriphosphate triphosphohydrolase-like protein (383 aa).

The region spanning 62–198 (RLTHSLEVST…AALADDISYI (137 aa)) is the HD domain.

It belongs to the dGTPase family. Type 2 subfamily.

The polypeptide is Deoxyguanosinetriphosphate triphosphohydrolase-like protein (Rickettsia felis (strain ATCC VR-1525 / URRWXCal2) (Rickettsia azadi)).